The following is a 443-amino-acid chain: MESLASLYKNHIATLQERTRDALTRFKLDALLIHSGELFNVFLDDHPYPFKVNPQFKAWVPVTQVPNCWLLVDGVNKPKLWFYLPVDYWHNVEPLPTSFWTEDVEVIALPKADGIGSLLPAARGNIGYIGPVPERALQLGIEASNINPKGVIDYLHYYRSFKTEYELACMREAQKMAVNGHRAAEEAFRSGMSEFDINIAYLTATGHRDTDVPYSNIVALNEHAAVLHYTKLDHQASEEMRSFLLDAGAEYNGYAADLTRTWSAKSDNDYAQLVKDVNDEQLALIATMKAGVSYVDYHIQFHQRIAKLLRKHQIITDMSEEAMVENDLTGPFMPHGIGHPLGLQVHDVAGFMQDDSGTHLAAPAKYPYLRCTRILQPGMVLTIEPGIYFIESLLAPWREGQFSKHFNWQKIEALKPFGGIRIEDNVVIHENNVENMTRDLKLA.

Mn(2+)-binding residues include D246, D257, H339, E384, and E423.

The protein belongs to the peptidase M24B family. Bacterial-type prolidase subfamily. Mn(2+) serves as cofactor.

It catalyses the reaction Xaa-L-Pro dipeptide + H2O = an L-alpha-amino acid + L-proline. Its function is as follows. Splits dipeptides with a prolyl residue in the C-terminal position. This Escherichia coli O157:H7 protein is Xaa-Pro dipeptidase.